Reading from the N-terminus, the 270-residue chain is Co-chaperone protein DjlA (270 aa).

Residues 1-6 (MQYWGK) are Periplasmic-facing. Residues 7-31 (IIGVAVALMMGGGFWGVVLGLLVGH) form a helical membrane-spanning segment. At 32-270 (MFDKARSRKM…ELIKEQKGFK (239 aa)) the chain is on the cytoplasmic side. Residues 204–270 (DACNVLGVKT…ELIKEQKGFK (67 aa)) enclose the J domain.

As to quaternary structure, homodimer.

The protein localises to the cell inner membrane. Its function is as follows. Regulatory DnaK co-chaperone. Direct interaction between DnaK and DjlA is needed for the induction of the wcaABCDE operon, involved in the synthesis of a colanic acid polysaccharide capsule, possibly through activation of the RcsB/RcsC phosphotransfer signaling pathway. The colanic acid capsule may help the bacterium survive conditions outside the host. This chain is Co-chaperone protein DjlA, found in Salmonella paratyphi A (strain ATCC 9150 / SARB42).